We begin with the raw amino-acid sequence, 141 residues long: Nuclear transcription factor Y subunit B-1 (141 aa).

Residues 1–23 form a disordered region; it reads MADTPSSPAGDGGESGGSVREQD. At A2 the chain carries N-acetylalanine. The DNA-binding element occupies 26–32; the sequence is LPIANIS. Residues 53–64 form a subunit association domain (SAD) region; that stretch reads VQECVSEFISFI. The segment at 114-141 is disordered; it reads DNKGSGKSGDGSNRDAGGGVSGEEMPSW.

This sequence belongs to the NFYB/HAP3 subunit family. In terms of assembly, heterotrimeric transcription factor composed of three components, NF-YA, NF-YB and NF-YC. NF-YB and NF-YC must interact and dimerize for NF-YA association and DNA binding. Binds directly with DPB3-1. As to expression, ubiquitous. Predominantly expressed in leaves, flowers and siliques.

It localises to the nucleus. Its function is as follows. Component of the NF-Y/HAP transcription factor complex. The NF-Y complex stimulates the transcription of various genes by recognizing and binding to a CCAAT motif in promoters. This Arabidopsis thaliana (Mouse-ear cress) protein is Nuclear transcription factor Y subunit B-1.